The primary structure comprises 490 residues: MAEQPWDLRRVLDEIKDDPKNYHETDVEVDPNAELSGVYRYIGAGGTVQRPTQEGPAMMFNNVKGFPDTRVLTGLMASRRRVGKMFHHDYQTLGQYLNEAVSNPVAPETVAEADAPAHDVVYKATDEGFDIRKLVAAPTNTPQDAGPYITVGVVFGSSMDKSKSDVTIHRMVLEDKDKLGIYIMPGGRHIGAFAEEYEKANKPMPITINIGLDPAITIGATFEPPTTPFGYNELGVAGAIRNQAVQLVDGVTVDEKAIARSEYTLEGYIMPNERIQEDINTHTGKAMPEFPGYDGDANPALQVIKVTAVTHRKNAIMQSVIGPSEEHVSMAGIPTEASILQLVNRAIPGKVTNVYNPPAGGGKLMTIMQIHKDNEADEGIQRQAALLAFSAFKELKTVILVDEDVDIFDMNDVIWTMNTRFQADQDLMVLSGMRNHPLDPSERPQYDPKSIRFRGMSSKLVIDGTVPFDMKDQFERAQFMKVADWEKYLK.

Mn(2+) is bound at residue aspartate 165. Prenylated FMN contacts are provided by residues 168 to 170 (IHR) and glycine 187. A Mn(2+)-binding site is contributed by glutamate 233. The active-site Proton acceptor is glutamate 289.

The protein belongs to the UbiD family. Prenylated FMN serves as cofactor. It depends on Mn(2+) as a cofactor.

It catalyses the reaction 3,4,5-trihydroxybenzoate + H(+) = 1,2,3-trihydroxybenzene + CO2. The catalysed reaction is 3,4-dihydroxybenzoate + H(+) = catechol + CO2. In terms of biological role, involved in tannin degradation. Catalyzes the decarboxylation of gallic acid and protocatechuic acid to pyrogallol and catechol, respectively. The chain is Gallate decarboxylase from Lactiplantibacillus plantarum (strain ATCC BAA-793 / NCIMB 8826 / WCFS1) (Lactobacillus plantarum).